A 710-amino-acid polypeptide reads, in one-letter code: Methionine--tRNA ligase (710 aa).

Positions 26 to 36 match the 'HIGH' region motif; it reads PYANGQIHIGH. Residues C157, C160, C170, and C173 each contribute to the Zn(2+) site. Positions 347-351 match the 'KMSKS' region motif; that stretch reads KMSKS. An ATP-binding site is contributed by K350. The tRNA-binding domain occupies 604–710; sequence DFAKIDLRIA…SGAKPGMRVK (107 aa).

Belongs to the class-I aminoacyl-tRNA synthetase family. MetG type 1 subfamily. Homodimer. Zn(2+) serves as cofactor.

The protein resides in the cytoplasm. It catalyses the reaction tRNA(Met) + L-methionine + ATP = L-methionyl-tRNA(Met) + AMP + diphosphate. In terms of biological role, is required not only for elongation of protein synthesis but also for the initiation of all mRNA translation through initiator tRNA(fMet) aminoacylation. This Paraburkholderia xenovorans (strain LB400) protein is Methionine--tRNA ligase.